Here is a 321-residue protein sequence, read N- to C-terminus: Cytochrome f (321 aa).

The N-terminal stretch at 1–38 (MKKNFYTISKTMSRSLKLILFSVFIGFSIFLIPQPTWA) is a signal peptide. Residues Tyr-39, Cys-59, Cys-62, and His-63 each contribute to the heme site. Residues 288 to 308 (VIGMIIFFIGVGLSQIMLVLK) traverse the membrane as a helical segment.

This sequence belongs to the cytochrome f family. As to quaternary structure, the 4 large subunits of the cytochrome b6-f complex are cytochrome b6, subunit IV (17 kDa polypeptide, PetD), cytochrome f and the Rieske protein, while the 4 small subunits are PetG, PetL, PetM and PetN. The complex functions as a dimer. Heme serves as cofactor.

Its subcellular location is the cellular thylakoid membrane. Its function is as follows. Component of the cytochrome b6-f complex, which mediates electron transfer between photosystem II (PSII) and photosystem I (PSI), cyclic electron flow around PSI, and state transitions. The protein is Cytochrome f of Prochlorococcus marinus (strain NATL1A).